A 495-amino-acid polypeptide reads, in one-letter code: UDP-glycosyltransferase 73C6 (495 aa).

Residues Ser-296, 356 to 358 (SPQ), 373 to 381 (HCGWNSTLE), and 395 to 398 (FADQ) each bind UDP-alpha-D-glucose. Positions 449–475 (SDDAKERRRRAKELGESAHKAVEEGGS) are disordered. Residues 450 to 471 (DDAKERRRRAKELGESAHKAVE) are compositionally biased toward basic and acidic residues.

It belongs to the UDP-glycosyltransferase family. In terms of tissue distribution, expressed in leaves and flowers, and at a very low level in roots.

Its function is as follows. Acts as a UDP-glucose:flavonol-3-O-glycoside-7-O-glucosyltransferase. 6- and 7-hydroxyflavone, but not 3- or 5-hydroxyflavone are accepted as substrates. Possesses low quercetin 3-O-glucosyltransferase, 7-O-glucosyltransferase and 4'-O-glucosyltransferase activities in vitro. This is UDP-glycosyltransferase 73C6 (UGT73C6) from Arabidopsis thaliana (Mouse-ear cress).